Consider the following 323-residue polypeptide: Caspase-1 (323 aa).

Positions 1–33 are excised as a propeptide; that stretch reads MTDECVTRNYGVGIRSPNGSENRGSFIMADNTD. Catalysis depends on residues histidine 154 and cysteine 196. A propeptide spanning residues 203–215 is cleaved from the precursor; that stretch reads GGITLEKGVTETD.

Belongs to the peptidase C14A family. As to quaternary structure, heterotetramer that consists of two anti-parallel arranged heterodimers, each one formed by a 22 kDa (p22) and a 13 kDa (p13) subunit.

Functionally, involved in the activation cascade of caspases responsible for apoptosis execution. Proteolytically cleaves poly(ADP-ribose) polymerase (PARP). Loss of zygotic DCP-1 function causes larval lethality and melanotic tumors. This chain is Caspase-1 (Dcp-1), found in Drosophila melanogaster (Fruit fly).